The chain runs to 196 residues: Pyridoxal 5'-phosphate synthase subunit PdxT (196 aa).

Residue 47 to 49 (GES) participates in L-glutamine binding. Cys-79 functions as the Nucleophile in the catalytic mechanism. Residues Arg-106 and 134 to 135 (IR) each bind L-glutamine. Active-site charge relay system residues include His-170 and Glu-172.

Belongs to the glutaminase PdxT/SNO family. In terms of assembly, in the presence of PdxS, forms a dodecamer of heterodimers. Only shows activity in the heterodimer.

It carries out the reaction aldehydo-D-ribose 5-phosphate + D-glyceraldehyde 3-phosphate + L-glutamine = pyridoxal 5'-phosphate + L-glutamate + phosphate + 3 H2O + H(+). The enzyme catalyses L-glutamine + H2O = L-glutamate + NH4(+). Its pathway is cofactor biosynthesis; pyridoxal 5'-phosphate biosynthesis. Catalyzes the hydrolysis of glutamine to glutamate and ammonia as part of the biosynthesis of pyridoxal 5'-phosphate. The resulting ammonia molecule is channeled to the active site of PdxS. This is Pyridoxal 5'-phosphate synthase subunit PdxT from Bacillus velezensis (strain DSM 23117 / BGSC 10A6 / LMG 26770 / FZB42) (Bacillus amyloliquefaciens subsp. plantarum).